The chain runs to 210 residues: MVRRTKEEAQETRAQIIEAAERAFYKRGVARTTLADIAELAGVTRGAIYWHFNNKAELVQALLDSLHETHDHLARASESEDELDPLGCMRKLLLQVFNELVLDARTRRINEILHHKCEFTDDMCEIRQQRQSAVLDCHKGITLALANAVRRGQLPGELDVERAAVAMFAYVDGLIGRWLLLPDSVDLLGDVEKWVDTGLDMLRLSPALRK.

The HTH tetR-type domain occupies 10–70 (QETRAQIIEA…ALLDSLHETH (61 aa)). The segment at residues 33–52 (TLADIAELAGVTRGAIYWHF) is a DNA-binding region (H-T-H motif).

Probable regulatory protein for the antibiotic efflux pump arpABC operon. May function as a repressor. The polypeptide is Probable HTH-type transcriptional regulator ArpR (arpR) (Pseudomonas putida (Arthrobacter siderocapsulatus)).